The following is a 326-amino-acid chain: Phospho-N-acetylmuramoyl-pentapeptide-transferase (326 aa).

Transmembrane regions (helical) follow at residues 3–23, 51–71, 79–99, 115–135, 138–158, 169–189, 195–215, 221–243, and 306–326; these read ISIS…PAFI, TMGG…VALF, VGMI…DDFL, LALQ…GGDM, VFGY…FWLV, GIDG…GVIA, MDIL…FVFN, VFMG…MALH, and FFFW…LYLM.

This sequence belongs to the glycosyltransferase 4 family. MraY subfamily. It depends on Mg(2+) as a cofactor.

It localises to the cell membrane. It catalyses the reaction UDP-N-acetyl-alpha-D-muramoyl-L-alanyl-gamma-D-glutamyl-L-lysyl-D-alanyl-D-alanine + di-trans,octa-cis-undecaprenyl phosphate = Mur2Ac(oyl-L-Ala-gamma-D-Glu-L-Lys-D-Ala-D-Ala)-di-trans,octa-cis-undecaprenyl diphosphate + UMP. It functions in the pathway cell wall biogenesis; peptidoglycan biosynthesis. Its function is as follows. Catalyzes the initial step of the lipid cycle reactions in the biosynthesis of the cell wall peptidoglycan: transfers peptidoglycan precursor phospho-MurNAc-pentapeptide from UDP-MurNAc-pentapeptide onto the lipid carrier undecaprenyl phosphate, yielding undecaprenyl-pyrophosphoryl-MurNAc-pentapeptide, known as lipid I. The polypeptide is Phospho-N-acetylmuramoyl-pentapeptide-transferase (Streptococcus pneumoniae (strain Taiwan19F-14)).